Here is a 301-residue protein sequence, read N- to C-terminus: N-acetylmuramic acid 6-phosphate etherase (301 aa).

Residues 57 to 220 (IAETFMKNGR…TTGAMIKTGK (164 aa)) form the SIS domain. Glu-85 functions as the Proton donor in the catalytic mechanism. The active site involves Glu-116.

Belongs to the GCKR-like family. MurNAc-6-P etherase subfamily. In terms of assembly, homodimer.

It carries out the reaction N-acetyl-D-muramate 6-phosphate + H2O = N-acetyl-D-glucosamine 6-phosphate + (R)-lactate. Its pathway is amino-sugar metabolism; 1,6-anhydro-N-acetylmuramate degradation. The protein operates within amino-sugar metabolism; N-acetylmuramate degradation. It functions in the pathway cell wall biogenesis; peptidoglycan recycling. In terms of biological role, specifically catalyzes the cleavage of the D-lactyl ether substituent of MurNAc 6-phosphate, producing GlcNAc 6-phosphate and D-lactate. Together with AnmK, is also required for the utilization of anhydro-N-acetylmuramic acid (anhMurNAc) either imported from the medium or derived from its own cell wall murein, and thus plays a role in cell wall recycling. In Pasteurella multocida (strain Pm70), this protein is N-acetylmuramic acid 6-phosphate etherase.